The chain runs to 251 residues: 4-hydroxy-tetrahydrodipicolinate reductase (251 aa).

NAD(+)-binding positions include glycine 8–methionine 13, glycine 76–threonine 78, and alanine 106–phenylalanine 109. The active-site Proton donor/acceptor is histidine 136. Residue histidine 137 coordinates (S)-2,3,4,5-tetrahydrodipicolinate. Lysine 140 (proton donor) is an active-site residue. A (S)-2,3,4,5-tetrahydrodipicolinate-binding site is contributed by glycine 146–threonine 147.

Belongs to the DapB family.

Its subcellular location is the cytoplasm. The catalysed reaction is (S)-2,3,4,5-tetrahydrodipicolinate + NAD(+) + H2O = (2S,4S)-4-hydroxy-2,3,4,5-tetrahydrodipicolinate + NADH + H(+). It catalyses the reaction (S)-2,3,4,5-tetrahydrodipicolinate + NADP(+) + H2O = (2S,4S)-4-hydroxy-2,3,4,5-tetrahydrodipicolinate + NADPH + H(+). The protein operates within amino-acid biosynthesis; L-lysine biosynthesis via DAP pathway; (S)-tetrahydrodipicolinate from L-aspartate: step 4/4. Its function is as follows. Catalyzes the conversion of 4-hydroxy-tetrahydrodipicolinate (HTPA) to tetrahydrodipicolinate. In Bifidobacterium longum subsp. infantis (strain ATCC 15697 / DSM 20088 / JCM 1222 / NCTC 11817 / S12), this protein is 4-hydroxy-tetrahydrodipicolinate reductase.